The chain runs to 528 residues: PH domain-containing protein DDB_G0267786 (528 aa).

Residues 59 to 180 enclose the PH domain; sequence SDVFSGYLVK…WIEIFKTCCR (122 aa).

The protein is PH domain-containing protein DDB_G0267786 of Dictyostelium discoideum (Social amoeba).